Reading from the N-terminus, the 313-residue chain is Olfactory receptor 1f45 (313 aa).

Residues Met1 to Gln25 are Extracellular-facing. An N-linked (GlcNAc...) asparagine glycan is attached at Asn5. Residues Leu26 to Gly50 form a helical membrane-spanning segment. At Thr51 to Thr57 the chain is on the cytoplasmic side. The chain crosses the membrane as a helical span at residues Pro58–Pro79. At Lys80 to Gln100 the chain is on the extracellular side. A disulfide bridge links Cys97 with Cys189. The chain crosses the membrane as a helical span at residues Leu101–Tyr120. Topologically, residues Asp121–Gln139 are cytoplasmic. The chain crosses the membrane as a helical span at residues Leu140–Leu158. The Extracellular portion of the chain corresponds to His159–Glu196. The helical transmembrane segment at Leu197 to Ile219 threads the bilayer. Residues His220–Lys236 lie on the Cytoplasmic side of the membrane. The chain crosses the membrane as a helical span at residues Ser237–Phe260. Residues Asn261–Met272 lie on the Extracellular side of the membrane. A helical transmembrane segment spans residues Ala273–Leu292. The Cytoplasmic portion of the chain corresponds to Arg293 to Gln313.

It belongs to the G-protein coupled receptor 1 family. As to expression, olfactory epithelium.

Its subcellular location is the cell membrane. Its function is as follows. Odorant receptor. The polypeptide is Olfactory receptor 1f45 (Or1f45) (Rattus norvegicus (Rat)).